We begin with the raw amino-acid sequence, 442 residues long: Large ribosomal subunit protein mL65 (442 aa).

This sequence belongs to the mitochondrion-specific ribosomal protein mL65 family. As to quaternary structure, component of the mitochondrial ribosome small subunit (28S) which comprises a 12S rRNA and about 30 distinct proteins.

The protein localises to the mitochondrion. The protein is Large ribosomal subunit protein mL65 (Mrps30) of Mus musculus (Mouse).